The primary structure comprises 47 residues: Wound-induced basic protein (47 aa).

Positions 1 to 47 (MIYDVNSPLFRSFLSQKGGSSDKRKTEEQKPKEHRPKASENKPIMTE) are disordered. The segment covering 20-40 (SSDKRKTEEQKPKEHRPKASE) has biased composition (basic and acidic residues).

As to expression, abundant in radicals and epicotyls of seedlings and higher in the roots than in stems and leaves of mature plants.

The protein is Wound-induced basic protein (PR4) of Phaseolus vulgaris (Kidney bean).